The primary structure comprises 281 residues: Ermin (281 aa).

3 stretches are compositionally biased toward polar residues: residues 1 to 12 (MTDTPETLSGTE), 21 to 31 (NGQQPSSQTRQ), and 135 to 147 (AQQQ…DAST). Disordered regions lie at residues 1-80 (MTDT…KILN), 110-147 (REGH…DAST), and 167-248 (KCDE…GDIA). A compositionally biased stretch (acidic residues) spans 169–197 (DEEEEEEEEVWNEEINEEDVDECAEEEDE). Residues 198-223 (VRVIEFKRKHREGSPLKEESLAREDS) are compositionally biased toward basic and acidic residues. A phosphoserine mark is found at serine 211, serine 223, serine 227, and serine 230. Phosphothreonine is present on threonine 234. A binds actin region spans residues 262-281 (KIRKGNTKQRIDEFESMMHL).

Binds actin. As to expression, brain and spinal cord. Exclusively expressed by the oligodendrocytes. Appears at a late stage during myelination, and in the mature nerves, it is localized to the outer cytoplasmic lip of the myelin sheath and the paranodal loops.

The protein localises to the cytoplasm. The protein resides in the cytoskeleton. Functionally, plays a role in cytoskeletal rearrangements during the late wrapping and/or compaction phases of myelinogenesis as well as in maintenance and stability of myelin sheath in the adult. May play an important role in late-stage oligodendroglia maturation, myelin/Ranvier node formation during CNS development, and in the maintenance and plasticity of related structures in the mature CNS. The sequence is that of Ermin (Ermn) from Mus musculus (Mouse).